The sequence spans 239 residues: Lactate utilization protein A (239 aa).

Belongs to the LutA/YkgE family.

Is involved in L-lactate degradation and allows cells to grow with lactate as the sole carbon source. The protein is Lactate utilization protein A of Bacillus cereus (strain B4264).